A 315-amino-acid polypeptide reads, in one-letter code: G-box-binding factor 1 (315 aa).

Disordered regions lie at residues methionine 1 to serine 56 and methionine 93 to leucine 268. Pro residues predominate over residues proline 46–serine 56. 2 stretches are compositionally biased toward polar residues: residues glycine 133–glycine 164 and alanine 178–isoleucine 187. The bZIP domain occupies glutamate 222 to isoleucine 285. A basic motif region spans residues lysine 224–lysine 243. The span at glutamine 249–glutamine 262 shows a compositional bias: polar residues. The leucine-zipper stretch occupies residues leucine 250–isoleucine 285.

It belongs to the bZIP family. Monomer and heterodimers with BZIP16 and BZIP68. Interacts with GIP1. Phosphorylated by CK2. Found in both light and dark grown leaves.

Its subcellular location is the nucleus. In terms of biological role, binds to the G-box motif (5'-CCACGTGG-3') of the rbcS-1A gene promoter. G-box and G-box-like motifs are cis-acting elements defined in promoters of certain plant genes which are regulated by such diverse stimuli as light-induction or hormone control. Binds to the G-box motif 5'-CACGTG-3' of LHCB2.4 (At3g27690) promoter. May act as transcriptional activator in light-regulated expression of LHCB2.4. Probably binds DNA as monomer. DNA-binding activity is redox-dependent. The chain is G-box-binding factor 1 (GBF1) from Arabidopsis thaliana (Mouse-ear cress).